A 589-amino-acid polypeptide reads, in one-letter code: Capsid scaffolding protein (589 aa).

Active-site charge relay system residues include histidine 47, serine 118, and histidine 142. The segment covering 264-273 has biased composition (basic and acidic residues); sequence EKERPKEPEQ. Residues 264-283 are disordered; the sequence is EKERPKEPEQSHVPTESMSH. Residues 307 to 326 form an interaction with pAP region; that stretch reads HDGVYLPKDAFFSLIGASRP. Disordered regions lie at residues 421 to 478 and 514 to 552; these read RSRS…GDRY and ASPT…AERG. 2 short sequence motifs (nuclear localization signal) span residues 428–433 and 453–459; these read KRRRER and KARKRLK. Residues 453–462 show a composition bias toward basic residues; the sequence is KARKRLKAHH. Residues 514–543 are compositionally biased toward low complexity; it reads ASPTTTTSHQAEASEPQASTAAAAPSTASS. The interval 569–589 is interaction with major capsid protein; it reads PPKDMVDLNRRLFVAALNKME.

The protein belongs to the herpesviridae capsid scaffolding protein family. As to quaternary structure, homomultimer. Interacts with major capsid protein. In terms of assembly, exists in a monomer-dimer equilibrium with the dimer being the active species. Capsid scaffolding protein is cleaved by assemblin after formation of the spherical procapsid. As a result, the capsid obtains its mature, icosahedral shape. Cleavages occur at two or more sites: release (R-site) and maturation (M-site).

Its subcellular location is the host cytoplasm. It localises to the host nucleus. The catalysed reaction is Cleaves -Ala-|-Ser- and -Ala-|-Ala- bonds in the scaffold protein.. Acts as a scaffold protein by binding major capsid protein in the cytoplasm, inducing the nuclear localization of both proteins. Multimerizes in the nucleus such as major capsid protein forms the icosahedral T=16 capsid. Autocatalytic cleavage releases the assembly protein, and subsequently abolishes interaction with major capsid protein. Cleavages products are evicted from the capsid before or during DNA packaging. Functionally, protease that plays an essential role in virion assembly within the nucleus. Catalyzes the cleavage of the assembly protein after formation of the spherical procapsid. By that cleavage, the capsid matures and gains its icosahedral shape. The cleavage sites seem to include -Ala-Ser-, -Ala-Ala-, as well as Ala-Thr bonds. Assemblin and cleavages products are evicted from the capsid before or during DNA packaging. Its function is as follows. Plays a major role in capsid assembly. Acts as a scaffold protein by binding major capsid protein. Multimerizes in the nucleus such as major capsid protein forms the icosahedral T=16 capsid. Cleaved by assemblin after capsid completion. The cleavages products are evicted from the capsid before or during DNA packaging. The protein is Capsid scaffolding protein (UL80) of Simian cytomegalovirus (strain Colburn).